We begin with the raw amino-acid sequence, 420 residues long: Exodeoxyribonuclease 7 large subunit (420 aa).

Belongs to the XseA family. In terms of assembly, heterooligomer composed of large and small subunits.

Its subcellular location is the cytoplasm. The catalysed reaction is Exonucleolytic cleavage in either 5'- to 3'- or 3'- to 5'-direction to yield nucleoside 5'-phosphates.. In terms of biological role, bidirectionally degrades single-stranded DNA into large acid-insoluble oligonucleotides, which are then degraded further into small acid-soluble oligonucleotides. This chain is Exodeoxyribonuclease 7 large subunit, found in Helicobacter pylori (strain HPAG1).